A 212-amino-acid polypeptide reads, in one-letter code: uncharacterized protein (212 aa).

Residues Met-1–Ala-20 form the signal peptide.

It localises to the virion. This is an uncharacterized protein from Acanthamoeba polyphaga (Amoeba).